A 342-amino-acid polypeptide reads, in one-letter code: Cytosolic Fe-S cluster assembly factor NBP35 (342 aa).

4 residues coordinate [4Fe-4S] cluster: Cys33, Cys47, Cys50, and Cys56. 86–93 (GKGGVGKS) lines the ATP pocket. Residues Cys259 and Cys262 each contribute to the [4Fe-4S] cluster site.

Belongs to the Mrp/NBP35 ATP-binding proteins family. NUBP1/NBP35 subfamily. Heterotetramer of 2 NBP35 and 2 CFD1 chains. [4Fe-4S] cluster is required as a cofactor.

It is found in the cytoplasm. Functionally, component of the cytosolic iron-sulfur (Fe/S) protein assembly (CIA) machinery. Required for maturation of extramitochondrial Fe-S proteins. The NBP35-CFD1 heterotetramer forms a Fe-S scaffold complex, mediating the de novo assembly of an Fe-S cluster and its transfer to target apoproteins. This Gibberella zeae (strain ATCC MYA-4620 / CBS 123657 / FGSC 9075 / NRRL 31084 / PH-1) (Wheat head blight fungus) protein is Cytosolic Fe-S cluster assembly factor NBP35.